We begin with the raw amino-acid sequence, 167 residues long: Ribosome maturation factor RimM (167 aa).

In terms of domain architecture, PRC barrel spans 92-165; that stretch reads EDTYYIADII…RITIDPIEGM (74 aa).

It belongs to the RimM family. As to quaternary structure, binds ribosomal protein uS19.

Its subcellular location is the cytoplasm. Its function is as follows. An accessory protein needed during the final step in the assembly of 30S ribosomal subunit, possibly for assembly of the head region. Essential for efficient processing of 16S rRNA. May be needed both before and after RbfA during the maturation of 16S rRNA. It has affinity for free ribosomal 30S subunits but not for 70S ribosomes. This is Ribosome maturation factor RimM from Alkaliphilus oremlandii (strain OhILAs) (Clostridium oremlandii (strain OhILAs)).